A 115-amino-acid chain; its full sequence is Large ribosomal subunit protein bL19 (115 aa).

The protein belongs to the bacterial ribosomal protein bL19 family.

Its function is as follows. This protein is located at the 30S-50S ribosomal subunit interface and may play a role in the structure and function of the aminoacyl-tRNA binding site. The protein is Large ribosomal subunit protein bL19 of Bacillus licheniformis (strain ATCC 14580 / DSM 13 / JCM 2505 / CCUG 7422 / NBRC 12200 / NCIMB 9375 / NCTC 10341 / NRRL NRS-1264 / Gibson 46).